The primary structure comprises 203 residues: ATP-dependent Clp protease proteolytic subunit (203 aa).

Serine 107 (nucleophile) is an active-site residue. Histidine 132 is a catalytic residue.

The protein belongs to the peptidase S14 family. In terms of assembly, fourteen ClpP subunits assemble into 2 heptameric rings which stack back to back to give a disk-like structure with a central cavity, resembling the structure of eukaryotic proteasomes.

The protein resides in the cytoplasm. The enzyme catalyses Hydrolysis of proteins to small peptides in the presence of ATP and magnesium. alpha-casein is the usual test substrate. In the absence of ATP, only oligopeptides shorter than five residues are hydrolyzed (such as succinyl-Leu-Tyr-|-NHMec, and Leu-Tyr-Leu-|-Tyr-Trp, in which cleavage of the -Tyr-|-Leu- and -Tyr-|-Trp bonds also occurs).. Functionally, cleaves peptides in various proteins in a process that requires ATP hydrolysis. Has a chymotrypsin-like activity. Plays a major role in the degradation of misfolded proteins. The protein is ATP-dependent Clp protease proteolytic subunit of Shewanella sediminis (strain HAW-EB3).